Consider the following 518-residue polypeptide: Dihydro-ML-236C monooxygenase mlcC (518 aa).

At 1-31 (MLGQVLLTVESYQWVSTPQALVAVAVLLSLI) the chain is on the cytoplasmic side. A helical; Signal-anchor for type II membrane protein transmembrane segment spans residues 32-48 (AYRLRGRQSELQVYNPK). Residues 49–518 (KWWELTTMRA…EDIPLPHDRC (470 aa)) are Lumenal-facing. Position 454 (Cys454) interacts with heme.

It belongs to the cytochrome P450 family. It depends on heme as a cofactor.

Its subcellular location is the endoplasmic reticulum membrane. The catalysed reaction is dihydro-ML-236C carboxylate + reduced [NADPH--hemoprotein reductase] + O2 = ML-236C carboxylate + oxidized [NADPH--hemoprotein reductase] + 2 H2O + H(+). The enzyme catalyses ML-236C carboxylate + reduced [NADPH--hemoprotein reductase] + O2 = ML-236A carboxylate + oxidized [NADPH--hemoprotein reductase] + H2O + H(+). Its pathway is polyketide biosynthesis. Functionally, dihydro-ML-236C carboxylate monooxygenase; part of the gene cluster that mediates the biosynthesis of compactin, also known as mevastatin or ML-236B, and which acts as a potent competitive inhibitor of HMG-CoA reductase. Compactin biosynthesis is performed in two stages. The first stage is catalyzed by the nonaketide synthase mlcA, which belongs to type I polyketide synthases and catalyzes the iterative nine-step formation of the polyketide. This PKS stage is completed by the action of dehydrogenase mlcG, which catalyzes the NADPH-dependent reduction of the unsaturated tetra-, penta- and heptaketide intermediates that arise during the mlcA-mediated biosynthesis of the nonaketide chain and leads to dihydro-ML-236C carboxylate. Covalently bound dihydro-ML-236C carboxylate is released from mlcA by the mlcF esterase. Conversion of dihydro-ML-236C carboxylate into ML-236A carboxylate is subsequently performed with the participation of molecular oxygen and P450 monoogygenase mlcC. Finally, mlcH performs the conversion of ML-236A carboxylate to ML-236B/compactin carboxylate through the addition of the side-chain diketide moiety produced by the diketide synthase mlcB. This Penicillium citrinum protein is Dihydro-ML-236C monooxygenase mlcC.